Consider the following 207-residue polypeptide: Vascular endothelial growth factor B (207 aa).

The first 21 residues, methionine 1–alanine 21, serve as a signal peptide directing secretion. 2 cysteine pairs are disulfide-bonded: cysteine 78–cysteine 122 and cysteine 82–cysteine 124. A disordered region spans residues isoleucine 140 to alanine 182.

It belongs to the PDGF/VEGF growth factor family. In terms of assembly, homodimer; disulfide-linked. Can also form heterodimer with VEGF.

Its subcellular location is the secreted. Functionally, growth factor for endothelial cells. VEGF-B167 binds heparin and neuropilin-1 whereas the binding to neuropilin-1 of VEGF-B186 is regulated by proteolysis. This chain is Vascular endothelial growth factor B (Vegfb), found in Rattus norvegicus (Rat).